We begin with the raw amino-acid sequence, 83 residues long: Mu-theraphotoxin-Hhn2j 4 (83 aa).

An N-terminal signal peptide occupies residues Met1–Ala21. The propeptide occupies Ser22–Arg48. 3 cysteine pairs are disulfide-bonded: Cys50-Cys65, Cys57-Cys70, and Cys64-Cys77. A Leucine amide modification is found at Leu81.

Belongs to the neurotoxin 10 (Hwtx-1) family. 15 (Hntx-3) subfamily. Monomer. Expressed by the venom gland.

It localises to the secreted. Its function is as follows. Lethal neurotoxin. Selectively blocks tetrodotoxin-sensitive voltage-gated sodium channels (Nav). Does not affect tetrodotoxin-resistant voltage-gated sodium channels or calcium channels. The polypeptide is Mu-theraphotoxin-Hhn2j 4 (Cyriopagopus hainanus (Chinese bird spider)).